Here is an 845-residue protein sequence, read N- to C-terminus: Protein P (845 aa).

A terminal protein domain (TP) region spans residues 1–179 (MPLSYQHFRK…FCGSPYSWEQ (179 aa)). The segment at 180 to 348 (ELHHGRLVIK…YCLSHLVNLL (169 aa)) is spacer. The tract at residues 349-692 (EDWGPCTEHG…YMNLYPVARQ (344 aa)) is polymerase/reverse transcriptase domain (RT). The Reverse transcriptase domain maps to 359-602 (EHHIRIPRTP…YSLNFMGYVI (244 aa)). Residues D431, D553, and D554 each contribute to the Mg(2+) site.

Belongs to the hepadnaviridae P protein family.

It catalyses the reaction DNA(n) + a 2'-deoxyribonucleoside 5'-triphosphate = DNA(n+1) + diphosphate. The enzyme catalyses Endonucleolytic cleavage to 5'-phosphomonoester.. With respect to regulation, activated by host HSP70 and HSP40 in vitro to be able to bind the epsilon loop of the pgRNA. Because deletion of the RNase H region renders the protein partly chaperone-independent, the chaperones may be needed indirectly to relieve occlusion of the RNA-binding site by this domain. Inhibited by several reverse-transcriptase inhibitors: Lamivudine, Adefovir and Entecavir. Functionally, multifunctional enzyme that converts the viral RNA genome into dsDNA in viral cytoplasmic capsids. This enzyme displays a DNA polymerase activity that can copy either DNA or RNA templates, and a ribonuclease H (RNase H) activity that cleaves the RNA strand of RNA-DNA heteroduplexes in a partially processive 3'- to 5'-endonucleasic mode. Neo-synthesized pregenomic RNA (pgRNA) are encapsidated together with the P protein, and reverse-transcribed inside the nucleocapsid. Initiation of reverse-transcription occurs first by binding the epsilon loop on the pgRNA genome, and is initiated by protein priming, thereby the 5'-end of (-)DNA is covalently linked to P protein. Partial (+)DNA is synthesized from the (-)DNA template and generates the relaxed circular DNA (RC-DNA) genome. After budding and infection, the RC-DNA migrates in the nucleus, and is converted into a plasmid-like covalently closed circular DNA (cccDNA). The activity of P protein does not seem to be necessary for cccDNA generation, and is presumably released from (+)DNA by host nuclear DNA repair machinery. This chain is Protein P, found in Homo sapiens (Human).